The chain runs to 281 residues: LC-AMP precursor 3 (281 aa).

The first 19 residues, 1–19 (MKYTIIPFLLLVALTCATA), serve as a signal peptide directing secretion. Residues 20–56 (RSIDGSEKEVQEIREETPSSNEDVPFSLSANEDEEAR) constitute a propeptide that is removed on maturation. Position 74 is a leucine amide (Leu74). The propeptide occupies 75 to 89 (GREESLSANEDEEAR). The residue at position 114 (Ser114) is a Serine amide. Positions 115-129 (GREESFSANEDEEER) are excised as a propeptide. Residue Leu147 is modified to Leucine amide. Positions 148 to 162 (GREESISANEDEETR) are excised as a propeptide. Leu180 carries the leucine amide modification. A propeptide spanning residues 181–195 (GREESLSAIEDEEAR) is cleaved from the precursor. Leu213 carries the leucine amide modification. The propeptide occupies 214–228 (GREESLSANEDEEAR). Leu246 is subject to Leucine amide. Positions 247 to 261 (GREESLSANEDEEAR) are excised as a propeptide. Leu279 carries the leucine amide modification.

As to expression, expressed by the venom gland.

It localises to the secreted. In terms of biological role, antimicrobial peptide that acts by influencing bacterial cell membrane permeability at low concentrations and by directly disrupting structure-function at high concentrations. Shows activity against Gram-negative bacteria (S.typhimurium CGMCC 1.1174 (MIC=2.5 uM), E.coli CCTCC AB 2018675 (MIC=5 uM), S.dysenteriae CGMCC 1.1869 (MIC=2.5 uM), P.aeruginosa CGMCC 1.596 (MIC 5-10 uM), K.pneumoniae (MIC=10 uM), A.baumannii (MIC=5-10 uM)), and Gram-positive bacteria (S.aureus CMCC 26003 or MRSA ATCC 43300 (MIC=5 uM), and E.faecium (MIC=2.5-5 uM)). Inhibits biofilm formation of E.coli and S.aureus in a dose-dependent manner and disrupts established biofilms. Demonstrates minimal bacterial resistance, excellent stability, negligible mammalian cell toxicity, low hemolytic activity, and appropriate selectivity for both normal and tumor cells. When combined with traditional antibiotics, exhibits additive or synergistic therapeutic effects. In vivo, in a neutropenic mouse thigh infection model, exhibits a therapeutic effect in inhibiting bacterial proliferation. The sequence is that of LC-AMP precursor 3 from Lycosa coelestis (Wolf spider).